Consider the following 553-residue polypeptide: Formate--tetrahydrofolate ligase (553 aa).

62–69 (TPAGEGKS) provides a ligand contact to ATP.

The protein belongs to the formate--tetrahydrofolate ligase family.

It catalyses the reaction (6S)-5,6,7,8-tetrahydrofolate + formate + ATP = (6R)-10-formyltetrahydrofolate + ADP + phosphate. It participates in one-carbon metabolism; tetrahydrofolate interconversion. The chain is Formate--tetrahydrofolate ligase from Limosilactobacillus reuteri subsp. reuteri (strain JCM 1112) (Lactobacillus reuteri).